The chain runs to 152 residues: Urease accessory protein UreE (152 aa).

It belongs to the UreE family.

The protein resides in the cytoplasm. In terms of biological role, involved in urease metallocenter assembly. Binds nickel. Probably functions as a nickel donor during metallocenter assembly. This chain is Urease accessory protein UreE, found in Psychromonas ingrahamii (strain DSM 17664 / CCUG 51855 / 37).